We begin with the raw amino-acid sequence, 201 residues long: Large ribosomal subunit protein uL4 (201 aa).

The interval 44 to 71 (RAQKTRAEVSGSGKKPWRQKGTGRARSG) is disordered.

It belongs to the universal ribosomal protein uL4 family. Part of the 50S ribosomal subunit.

One of the primary rRNA binding proteins, this protein initially binds near the 5'-end of the 23S rRNA. It is important during the early stages of 50S assembly. It makes multiple contacts with different domains of the 23S rRNA in the assembled 50S subunit and ribosome. Functionally, forms part of the polypeptide exit tunnel. The protein is Large ribosomal subunit protein uL4 of Actinobacillus succinogenes (strain ATCC 55618 / DSM 22257 / CCUG 43843 / 130Z).